The following is a 414-amino-acid chain: Voltage-gated ClC-type chloride channel ClcB (414 aa).

11 helical membrane-spanning segments follow: residues 5–25 (LVIS…FHQA), 54–74 (ALTP…YQRY), 116–136 (SAIG…SVFA), 147–167 (LWVA…PLAG), 169–189 (LFIA…PVVI), 220–240 (VQYF…PLFL), 255–275 (LLPP…SLIF), 292–312 (TPPG…AVLA), 327–347 (LFVG…WPVL), 353–373 (LLMA…APIM), and 381–401 (MTGE…ATTI).

It belongs to the chloride channel (TC 2.A.49) family. ClcB subfamily.

Its subcellular location is the cell inner membrane. Probably acts as an electrical shunt for an outwardly-directed proton pump that is linked to amino acid decarboxylation, as part of the extreme acid resistance (XAR) response. This is Voltage-gated ClC-type chloride channel ClcB from Yersinia pestis.